The following is a 389-amino-acid chain: SH3 and F-BAR domain-containing protein DDB_G0274695 (389 aa).

Residues Glu-3–Asp-258 form the F-BAR domain. The stretch at Lys-119–Leu-192 forms a coiled coil. Over residues Leu-300 to Pro-328 the composition is skewed to low complexity. The segment at Leu-300 to Ile-329 is disordered. The region spanning Ser-332–Ile-389 is the SH3 domain.

The polypeptide is SH3 and F-BAR domain-containing protein DDB_G0274695 (Dictyostelium discoideum (Social amoeba)).